A 341-amino-acid polypeptide reads, in one-letter code: Holliday junction branch migration complex subunit RuvB (341 aa).

Positions 4–185 are large ATPase domain (RuvB-L); that stretch reads TDRLIVPTAV…FGIVARLEFY (182 aa). ATP contacts are provided by residues Leu24, Arg25, Gly66, Lys69, Thr70, Thr71, 132 to 134, Arg175, Tyr185, and Arg222; that span reads EDF. Thr70 lines the Mg(2+) pocket. The tract at residues 186–256 is small ATPAse domain (RuvB-S); it reads SAEELGYIVH…VADAALVMLD (71 aa). A head domain (RuvB-H) region spans residues 259–341; that stretch reads RAGLDVMDRK…ATPASDAELF (83 aa). DNA is bound by residues Arg295, Arg314, and Arg319.

This sequence belongs to the RuvB family. In terms of assembly, homohexamer. Forms an RuvA(8)-RuvB(12)-Holliday junction (HJ) complex. HJ DNA is sandwiched between 2 RuvA tetramers; dsDNA enters through RuvA and exits via RuvB. An RuvB hexamer assembles on each DNA strand where it exits the tetramer. Each RuvB hexamer is contacted by two RuvA subunits (via domain III) on 2 adjacent RuvB subunits; this complex drives branch migration. In the full resolvosome a probable DNA-RuvA(4)-RuvB(12)-RuvC(2) complex forms which resolves the HJ.

It is found in the cytoplasm. It catalyses the reaction ATP + H2O = ADP + phosphate + H(+). In terms of biological role, the RuvA-RuvB-RuvC complex processes Holliday junction (HJ) DNA during genetic recombination and DNA repair, while the RuvA-RuvB complex plays an important role in the rescue of blocked DNA replication forks via replication fork reversal (RFR). RuvA specifically binds to HJ cruciform DNA, conferring on it an open structure. The RuvB hexamer acts as an ATP-dependent pump, pulling dsDNA into and through the RuvAB complex. RuvB forms 2 homohexamers on either side of HJ DNA bound by 1 or 2 RuvA tetramers; 4 subunits per hexamer contact DNA at a time. Coordinated motions by a converter formed by DNA-disengaged RuvB subunits stimulates ATP hydrolysis and nucleotide exchange. Immobilization of the converter enables RuvB to convert the ATP-contained energy into a lever motion, pulling 2 nucleotides of DNA out of the RuvA tetramer per ATP hydrolyzed, thus driving DNA branch migration. The RuvB motors rotate together with the DNA substrate, which together with the progressing nucleotide cycle form the mechanistic basis for DNA recombination by continuous HJ branch migration. Branch migration allows RuvC to scan DNA until it finds its consensus sequence, where it cleaves and resolves cruciform DNA. The chain is Holliday junction branch migration complex subunit RuvB from Thiobacillus denitrificans (strain ATCC 25259 / T1).